A 260-amino-acid polypeptide reads, in one-letter code: Phosphatidylglycerol--prolipoprotein diacylglyceryl transferase (260 aa).

Helical transmembrane passes span 17–37, 52–72, 85–105, and 113–133; these read VVKW…SWIF, LTAA…LHVI, IFSG…IGLW, and FNLG…QAIG. Arginine 134 lines the a 1,2-diacyl-sn-glycero-3-phospho-(1'-sn-glycerol) pocket. Helical transmembrane passes span 170–190, 198–218, and 227–247; these read APTQ…SLFI, GQLF…IGFV, and GLEQ…PLFI.

The protein belongs to the Lgt family.

The protein localises to the cell membrane. It catalyses the reaction L-cysteinyl-[prolipoprotein] + a 1,2-diacyl-sn-glycero-3-phospho-(1'-sn-glycerol) = an S-1,2-diacyl-sn-glyceryl-L-cysteinyl-[prolipoprotein] + sn-glycerol 1-phosphate + H(+). It functions in the pathway protein modification; lipoprotein biosynthesis (diacylglyceryl transfer). Catalyzes the transfer of the diacylglyceryl group from phosphatidylglycerol to the sulfhydryl group of the N-terminal cysteine of a prolipoprotein, the first step in the formation of mature lipoproteins. The chain is Phosphatidylglycerol--prolipoprotein diacylglyceryl transferase from Dehalococcoides mccartyi (strain ATCC BAA-2100 / JCM 16839 / KCTC 5957 / BAV1).